The primary structure comprises 451 residues: MLVTAYLFLLGLLALWGVLEFSACHSKPSASSNALGNPAFRQFQYDFYRTYFPALAADWLQGPYLYKLYQHYHFLEGQIAIIYVCGFGASVFAGLVSVPLTSRLGRRKSCILFCLLLSASYLCKLSQEYFVLMTGRVLGGFSSSLLFSCFEAWYTHEHAEQHDFPAEWLPHTFTRAAAWNGGIAIAAGITANVCAEWLGLGPASPSVLAVPLLVLSVVLVIREWDENYGQTSSFRRVCGDGLRCLLRDRRVLLLGTIQALFESVVYIFIFLWTPVLDPHNAPLGIAFSSFMAASAVGSSLYHLATSKKYHLQPMHVLCLSILMVFFSLFMLTFSTAPGQEHPTESLLAFLLIELACGLYFPAMRFLRRRLIPEKEQTGVLNWFRVPLNLLAGLGLLVLHDSDYQSGTRNMFSLCAVTMLLALLCVVSLFTMVRNDSELRLPASEPEPNGTE.

The next 12 helical transmembrane spans lie at 1–21 (MLVT…VLEF), 45–65 (YDFY…GPYL), 79–99 (IAII…VSVP), 130–150 (FVLM…FSCF), 180–200 (NGGI…WLGL), 201–221 (GPAS…VLVI), 251–271 (VLLL…FIFL), 281–301 (APLG…SSLY), 316–336 (VLCL…FSTA), 346–366 (LLAF…MRFL), 378–398 (GVLN…LLVL), and 410–430 (MFSL…SLFT).

Belongs to the major facilitator superfamily.

The protein localises to the cell membrane. Its function is as follows. Mediates high-affinity intracellular uptake of the rare oligo-element molybdenum. The chain is Molybdate-anion transporter (mfsd5) from Xenopus laevis (African clawed frog).